Reading from the N-terminus, the 328-residue chain is Phosphatidylglycerol--prolipoprotein diacylglyceryl transferase (328 aa).

Helical transmembrane passes span 15–35, 57–77, and 106–126; these read VIQG…ILIS, IFMF…STLV, and GMAI…TINT. Arg-156 serves as a coordination point for a 1,2-diacyl-sn-glycero-3-phospho-(1'-sn-glycerol). The next 2 membrane-spanning stretches (helical) occupy residues 242–262 and 289–309; these read GFIF…IEYL and ISMG…WIIV.

It belongs to the Lgt family.

Its subcellular location is the cell inner membrane. It catalyses the reaction L-cysteinyl-[prolipoprotein] + a 1,2-diacyl-sn-glycero-3-phospho-(1'-sn-glycerol) = an S-1,2-diacyl-sn-glyceryl-L-cysteinyl-[prolipoprotein] + sn-glycerol 1-phosphate + H(+). It functions in the pathway protein modification; lipoprotein biosynthesis (diacylglyceryl transfer). Catalyzes the transfer of the diacylglyceryl group from phosphatidylglycerol to the sulfhydryl group of the N-terminal cysteine of a prolipoprotein, the first step in the formation of mature lipoproteins. This Borreliella burgdorferi (strain ATCC 35210 / DSM 4680 / CIP 102532 / B31) (Borrelia burgdorferi) protein is Phosphatidylglycerol--prolipoprotein diacylglyceryl transferase.